The sequence spans 442 residues: Cell cycle checkpoint control protein RAD9B (442 aa).

2 disordered regions span residues 370-392 and 422-442; these read EVPE…TEDV and QSLA…FSTF. A Phosphoserine modification is found at serine 387.

Belongs to the rad9 family. Interacts with HUS1, HUS1B, RAD1, RAD9A and RAD17.

The sequence is that of Cell cycle checkpoint control protein RAD9B (RAD9B) from Bos taurus (Bovine).